A 125-amino-acid polypeptide reads, in one-letter code: Crustacean hyperglycemic hormones 5 (125 aa).

The N-terminal stretch at 1–34 (MKPGNTSFNMVSFRMVWTAMMATLLVAGASSAGT) is a signal peptide. 3 disulfides stabilise this stretch: cysteine 58–cysteine 94, cysteine 74–cysteine 90, and cysteine 77–cysteine 103. The residue at position 123 (valine 123) is a Valine amide.

Belongs to the arthropod CHH/MIH/GIH/VIH hormone family. Produced by the medulla terminalis X-organ in the eyestalks and transported to the sinus gland where they are stored and released.

The protein localises to the secreted. Its function is as follows. Hormone found in the sinus gland of isopods and decapods which controls the blood sugar level. Has a secretagogue action over the amylase released from the midgut gland. May act as a stress hormone and may be involved in the control of molting and reproduction. The sequence is that of Crustacean hyperglycemic hormones 5 from Penaeus japonicus (Kuruma prawn).